We begin with the raw amino-acid sequence, 73 residues long: Sec-independent protein translocase protein TatA (73 aa).

A helical transmembrane segment spans residues 1-21 (MFGLGAPELILILILALIIFG). The tract at residues 52 to 73 (EAAKIDDGNNNSDKEKATRQAS) is disordered.

This sequence belongs to the TatA/E family. Forms a complex with TatC.

It is found in the cell membrane. In terms of biological role, part of the twin-arginine translocation (Tat) system that transports large folded proteins containing a characteristic twin-arginine motif in their signal peptide across membranes. TatA could form the protein-conducting channel of the Tat system. This chain is Sec-independent protein translocase protein TatA, found in Moorella thermoacetica (strain ATCC 39073 / JCM 9320).